Reading from the N-terminus, the 502-residue chain is Activin receptor type-1-like (502 aa).

A signal peptide spans 1-22; it reads MTLGSFRRGLLMLSVAFGLTRG. The Extracellular portion of the chain corresponds to 23–119; it reads DLAKPSKLVN…EEPEVDAHLP (97 aa). The N-linked (GlcNAc...) asparagine glycan is linked to asparagine 32. 3 disulfide bridges follow: cysteine 33/cysteine 50, cysteine 35/cysteine 40, and cysteine 45/cysteine 68. A mediates specificity for BMP ligand region spans residues 72 to 75; it reads NQEL. 2 disulfide bridges follow: cysteine 76/cysteine 88 and cysteine 89/cysteine 94. The N-linked (GlcNAc...) asparagine glycan is linked to asparagine 97. Residues 120-140 traverse the membrane as a helical segment; that stretch reads LILGPVLALPVLVALGALGLW. At 141–502 the chain is on the cytoplasmic side; that stretch reads RVRRRQEKQR…HNPEKPKVIH (362 aa). Residues serine 154, serine 159, and serine 160 each carry the phosphoserine modification. Residues 171-200 form the GS domain; that stretch reads SMLGDFLDSDCTTGSGSGLPFLVQRTVARQ. A Protein kinase domain is found at 201 to 502; the sequence is VALVECVGKG…HNPEKPKVIH (302 aa). ATP is bound by residues 207–215 and lysine 228; that span reads VGKGRYGEV. The Proton acceptor role is filled by aspartate 329.

This sequence belongs to the protein kinase superfamily. TKL Ser/Thr protein kinase family. TGFB receptor subfamily. As to quaternary structure, interacts with TSC22D1/TSC-22. Requires Mg(2+) as cofactor. The cofactor is Mn(2+).

The protein localises to the cell membrane. The enzyme catalyses L-threonyl-[receptor-protein] + ATP = O-phospho-L-threonyl-[receptor-protein] + ADP + H(+). It catalyses the reaction L-seryl-[receptor-protein] + ATP = O-phospho-L-seryl-[receptor-protein] + ADP + H(+). Its function is as follows. Type I receptor for TGF-beta family ligands BMP9/GDF2 and BMP10 and important regulator of normal blood vessel development. On ligand binding, forms a receptor complex consisting of two type II and two type I transmembrane serine/threonine kinases. Type II receptors phosphorylate and activate type I receptors which autophosphorylate, then bind and activate SMAD transcriptional regulators. May bind activin as well. The polypeptide is Activin receptor type-1-like (Acvrl1) (Mus musculus (Mouse)).